The following is a 572-amino-acid chain: AAA ATPase forming ring-shaped complexes (572 aa).

Over residues 1–18 (MTTASQQTSSHSTASSTS) the composition is skewed to low complexity. The tract at residues 1 to 30 (MTTASQQTSSHSTASSTSRKGNNNDATPSL) is disordered. Residues 42–70 (TRNAKLVEMLKASRDKLDALNEQIRALSD) adopt a coiled-coil conformation. An ATP-binding site is contributed by 258–263 (GCGKTL). The tract at residues 543-572 (VAHHNRKTTTETEATEPEGTDSGKGHTDAS) is disordered. A compositionally biased stretch (basic and acidic residues) spans 563–572 (DSGKGHTDAS).

This sequence belongs to the AAA ATPase family. Homohexamer. Assembles into a hexameric ring structure.

The sequence is that of AAA ATPase forming ring-shaped complexes from Corynebacterium kroppenstedtii (strain DSM 44385 / JCM 11950 / CIP 105744 / CCUG 35717).